The chain runs to 202 residues: FMN-dependent NADH:quinone oxidoreductase (202 aa).

FMN-binding positions include Ser10, Ser16–Ser18, and Met96–Phe99.

This sequence belongs to the azoreductase type 1 family. In terms of assembly, homodimer. Requires FMN as cofactor.

The catalysed reaction is 2 a quinone + NADH + H(+) = 2 a 1,4-benzosemiquinone + NAD(+). It carries out the reaction N,N-dimethyl-1,4-phenylenediamine + anthranilate + 2 NAD(+) = 2-(4-dimethylaminophenyl)diazenylbenzoate + 2 NADH + 2 H(+). In terms of biological role, quinone reductase that provides resistance to thiol-specific stress caused by electrophilic quinones. Its function is as follows. Also exhibits azoreductase activity. Catalyzes the reductive cleavage of the azo bond in aromatic azo compounds to the corresponding amines. The protein is FMN-dependent NADH:quinone oxidoreductase of Beijerinckia indica subsp. indica (strain ATCC 9039 / DSM 1715 / NCIMB 8712).